Here is a 118-residue protein sequence, read N- to C-terminus: Small ribosomal subunit protein eS10 (118 aa).

The tract at residues 91–118 is disordered; that stretch reads RLKNAPAERPRPSRGGPRRGGYRGRARD. The segment covering 106–118 has biased composition (basic residues); it reads GPRRGGYRGRARD.

This sequence belongs to the eukaryotic ribosomal protein eS10 family. Component of the small ribosomal subunit. Mature ribosomes consist of a small (40S) and a large (60S) subunit. The 40S subunit contains about 32 different proteins and 1 molecule of RNA (18S). The 60S subunit contains 45 different proteins and 3 molecules of RNA (25S, 5.8S and 5S).

It is found in the cytoplasm. Functionally, component of the ribosome, a large ribonucleoprotein complex responsible for the synthesis of proteins in the cell. The small ribosomal subunit (SSU) binds messenger RNAs (mRNAs) and translates the encoded message by selecting cognate aminoacyl-transfer RNA (tRNA) molecules. The large subunit (LSU) contains the ribosomal catalytic site termed the peptidyl transferase center (PTC), which catalyzes the formation of peptide bonds, thereby polymerizing the amino acids delivered by tRNAs into a polypeptide chain. The nascent polypeptides leave the ribosome through a tunnel in the LSU and interact with protein factors that function in enzymatic processing, targeting, and the membrane insertion of nascent chains at the exit of the ribosomal tunnel. The polypeptide is Small ribosomal subunit protein eS10 (RPS10) (Candida albicans (strain SC5314 / ATCC MYA-2876) (Yeast)).